A 424-amino-acid polypeptide reads, in one-letter code: Histidine--tRNA ligase (424 aa).

The protein belongs to the class-II aminoacyl-tRNA synthetase family. Homodimer.

The protein localises to the cytoplasm. The catalysed reaction is tRNA(His) + L-histidine + ATP = L-histidyl-tRNA(His) + AMP + diphosphate + H(+). The protein is Histidine--tRNA ligase of Escherichia coli O127:H6 (strain E2348/69 / EPEC).